We begin with the raw amino-acid sequence, 802 residues long: Homeobox-leucine zipper protein ANTHOCYANINLESS 2 (802 aa).

Residues Q71–P143 are disordered. Residues R103–S113 are compositionally biased toward basic and acidic residues. Basic residues predominate over residues P133–T142. The segment at residues R134–L193 is a DNA-binding region (homeobox). Residues F182–N221 adopt a coiled-coil conformation. The START domain occupies G315 to I546.

The protein belongs to the HD-ZIP homeobox family. Class IV subfamily. As to quaternary structure, interacts with AIL7/PLT7, ANT, BBM and AIL1. In terms of tissue distribution, expressed in roots, stems, leaves and floral buds.

Its subcellular location is the nucleus. In terms of biological role, probable transcription factor involved in the regulation of the tissue-specific accumulation of anthocyanins and in cellular organization of the primary root. In Arabidopsis thaliana (Mouse-ear cress), this protein is Homeobox-leucine zipper protein ANTHOCYANINLESS 2.